A 188-amino-acid chain; its full sequence is UPF0461 protein C5orf24 homolog (188 aa).

The residue at position 37 (S37) is a Phosphoserine. K75 is covalently cross-linked (Glycyl lysine isopeptide (Lys-Gly) (interchain with G-Cter in SUMO2)). The disordered stretch occupies residues 79 to 142 (KKKKNLNRSG…GYKVSPGRPP (64 aa)). Positions 80–92 (KKKNLNRSGKRGR) are enriched in basic residues. A compositionally biased stretch (polar residues) spans 94–107 (SGTTKSAGYRTSTG). Phosphoserine occurs at positions 121 and 180. Residue K184 forms a Glycyl lysine isopeptide (Lys-Gly) (interchain with G-Cter in SUMO2) linkage.

This sequence belongs to the UPF0461 family.

The sequence is that of UPF0461 protein C5orf24 homolog from Bos taurus (Bovine).